A 119-amino-acid chain; its full sequence is Protein TusC (119 aa).

Belongs to the DsrF/TusC family. In terms of assembly, heterohexamer, formed by a dimer of trimers. The hexameric TusBCD complex contains 2 copies each of TusB, TusC and TusD. The TusBCD complex interacts with TusE.

It localises to the cytoplasm. Functionally, part of a sulfur-relay system required for 2-thiolation of 5-methylaminomethyl-2-thiouridine (mnm(5)s(2)U) at tRNA wobble positions. The protein is Protein TusC of Shigella dysenteriae serotype 1 (strain Sd197).